We begin with the raw amino-acid sequence, 1426 residues long: Protein RhsD (1426 aa).

The segment at 256-285 (AEEARTSSLSSSDSSRPLSASAFPDTLPGT) is disordered. Positions 262 to 277 (SSLSSSDSSRPLSASA) are enriched in low complexity. A 28 X approximate tandem repeats region spans residues 320-1197 (YTEAGELLAV…LNEENPHHVY (878 aa)). Tandem repeats lie at residues 334–356 (NTQV…HRYA), 357–378 (GRPE…LNPA), 379–421 (GLSY…ELAD), 422–442 (GSVT…TDAA), 443–464 (GRRT…TTPD), 465–485 (GRET…VSPD), 486–506 (GLES…TSRS), 507–529 (GETV…TDAT), 530–550 (GSTR…TDCS), 551–571 (GYQT…HREE), 572–592 (GISL…KDAQ), 593–613 (GRET…ITPD), 614–633 (GNRS…TTQG), 634–654 (GLTR…TNEN), 655–675 (GSHS…GGFD), 676–695 (GRTQ…SEDE), 696–715 (GLVI…RTVN), 716–738 (GEPA…HLSE), 739–762 (GHRV…QTVE), 812–832 (GGTP…VRSF), 833–861 (GSMA…HLNS), 862–882 (LVYD…ISGP), 883–905 (RQTR…LAPD), 906–941 (LDIR…NRIA), 942–970 (EDAH…VIRT), 971–995 (DDER…IQHG), and 996–1030 (EPLV…MSLS). Basic and acidic residues predominate over residues 1073-1085 (ENGEREKAQRRSL). The interval 1073–1097 (ENGEREKAQRRSLAETLQQEGSENG) is disordered. The stretch at 1173–1197 (GNTAWSAEYDEWGNQLNEENPHHVY) is repeat 28.

Belongs to the RHS family.

In terms of biological role, rhs elements have a nonessential function. They may play an important role in the natural ecology of the cell. The polypeptide is Protein RhsD (rhsD) (Escherichia coli (strain K12)).